The primary structure comprises 139 residues: Small ribosomal subunit protein bS6 (139 aa).

Residues 114 to 133 (KKEPREPRAPREPRVEKVDE) are compositionally biased toward basic and acidic residues. Positions 114 to 139 (KKEPREPRAPREPRVEKVDEQTFTEE) are disordered.

Belongs to the bacterial ribosomal protein bS6 family.

In terms of biological role, binds together with bS18 to 16S ribosomal RNA. This Campylobacter concisus (strain 13826) protein is Small ribosomal subunit protein bS6.